The primary structure comprises 359 residues: 3-dehydroquinate synthase (359 aa).

Residues 106-110, 130-131, lysine 143, and lysine 152 each bind NAD(+); these read GVVGD and TS. 3 residues coordinate Zn(2+): glutamate 185, histidine 246, and histidine 262.

Belongs to the sugar phosphate cyclases superfamily. Dehydroquinate synthase family. It depends on NAD(+) as a cofactor. Requires Co(2+) as cofactor. Zn(2+) serves as cofactor.

The protein localises to the cytoplasm. The enzyme catalyses 7-phospho-2-dehydro-3-deoxy-D-arabino-heptonate = 3-dehydroquinate + phosphate. Its pathway is metabolic intermediate biosynthesis; chorismate biosynthesis; chorismate from D-erythrose 4-phosphate and phosphoenolpyruvate: step 2/7. Its function is as follows. Catalyzes the conversion of 3-deoxy-D-arabino-heptulosonate 7-phosphate (DAHP) to dehydroquinate (DHQ). The chain is 3-dehydroquinate synthase from Lactiplantibacillus plantarum (strain ATCC BAA-793 / NCIMB 8826 / WCFS1) (Lactobacillus plantarum).